We begin with the raw amino-acid sequence, 133 residues long: ATP synthase epsilon chain (133 aa).

Belongs to the ATPase epsilon chain family. As to quaternary structure, F-type ATPases have 2 components, CF(1) - the catalytic core - and CF(0) - the membrane proton channel. CF(1) has five subunits: alpha(3), beta(3), gamma(1), delta(1), epsilon(1). CF(0) has three main subunits: a, b and c.

It localises to the cell membrane. Functionally, produces ATP from ADP in the presence of a proton gradient across the membrane. In Geobacillus thermodenitrificans (strain NG80-2), this protein is ATP synthase epsilon chain.